A 231-amino-acid polypeptide reads, in one-letter code: 6-phosphogluconolactonase (231 aa).

This sequence belongs to the glucosamine/galactosamine-6-phosphate isomerase family. 6-phosphogluconolactonase subfamily.

It carries out the reaction 6-phospho-D-glucono-1,5-lactone + H2O = 6-phospho-D-gluconate + H(+). The protein operates within carbohydrate degradation; pentose phosphate pathway; D-ribulose 5-phosphate from D-glucose 6-phosphate (oxidative stage): step 2/3. Functionally, hydrolysis of 6-phosphogluconolactone to 6-phosphogluconate. In Neisseria meningitidis serogroup A / serotype 4A (strain DSM 15465 / Z2491), this protein is 6-phosphogluconolactonase (pgl).